Here is a 304-residue protein sequence, read N- to C-terminus: MSDFFNSGWSLYVAGITVVSLIFCLVVLIVASRRKVMADDNTTGHVWDEDLQELNNPLPRWWAGLFLVTIAFAVIYLALYPGLGSNKGTLDWTSTGQHSAEMEKARAQMAPLYAKFVSQPAEALAKDPQAMAIGERLFANNCAQCHGADARGSKGFPNLTDNDWLHGGTHDKIKETITGGRVGNMPPMAAAVGTPEDVKNVAQYVLSLSGAPHNEVAAQLGKAKFAVCAACHGPDGKGMQAVGSANLTDKIWLHGLRRTGHHRLINNGKTNIMPAQASRLSPEQIHVLGAYVWSLSQTSTVAAR.

2 helical membrane-spanning segments follow: residues Leu11–Ala31 and Trp61–Pro81. Cytochrome c domains lie at Gln129–Ser209 and Val216–Ser296. Heme c is bound by residues Cys142, Cys145, His146, Met185, Cys228, Cys231, His232, and Met273.

The protein belongs to the CcoP / FixP family. Component of the cbb3-type cytochrome c oxidase at least composed of CcoN, CcoO, CcoQ and CcoP. It depends on heme c as a cofactor.

It localises to the cell inner membrane. It functions in the pathway energy metabolism; oxidative phosphorylation. Its function is as follows. C-type cytochrome. Part of the cbb3-type cytochrome c oxidase complex. CcoP subunit is required for transferring electrons from donor cytochrome c via its heme groups to CcoO subunit. From there, electrons are shuttled to the catalytic binuclear center of CcoN subunit where oxygen reduction takes place. The complex also functions as a proton pump. This chain is Cbb3-type cytochrome c oxidase subunit CcoP, found in Rubrivivax gelatinosus (Rhodocyclus gelatinosus).